The chain runs to 250 residues: Cholesterol ring-cleaving hydrolase IpdB subunit (250 aa).

It belongs to the 3-oxoacid CoA-transferase subunit B family. In terms of assembly, heterotetramer composed of 2 IpdA subunits and 2 IpdB subunits.

It carries out the reaction (3E)-2-(2-carboxylatoethyl)-3-methyl-6-oxocyclohex-1-ene-1-carboxyl-CoA + H2O = 6-methyl-3,7-dioxodecanedioyl-CoA. Its pathway is steroid metabolism; cholesterol degradation. Its function is as follows. Involved in the final steps of cholesterol and steroid degradation. Opens the last steroid ring of cholesterol by catalyzing the hydrolysis of (3E)-2-(2-carboxylatoethyl)-3-methyl-6-oxocyclohex-1-ene-1-carboxyl-CoA (COCHEA-CoA) to 6-methyl-3,7-dioxodecanedioyl-CoA (MeDODA-CoA). This is Cholesterol ring-cleaving hydrolase IpdB subunit from Mycobacterium bovis (strain ATCC BAA-935 / AF2122/97).